Consider the following 286-residue polypeptide: 33 kDa chaperonin (286 aa).

2 cysteine pairs are disulfide-bonded: C225/C227 and C258/C261.

Belongs to the HSP33 family. Under oxidizing conditions two disulfide bonds are formed involving the reactive cysteines. Under reducing conditions zinc is bound to the reactive cysteines and the protein is inactive.

It is found in the cytoplasm. Functionally, redox regulated molecular chaperone. Protects both thermally unfolding and oxidatively damaged proteins from irreversible aggregation. Plays an important role in the bacterial defense system toward oxidative stress. This chain is 33 kDa chaperonin, found in Shewanella sediminis (strain HAW-EB3).